Consider the following 141-residue polypeptide: Large ribosomal subunit protein uL11 (141 aa).

Belongs to the universal ribosomal protein uL11 family. Part of the ribosomal stalk of the 50S ribosomal subunit. Interacts with L10 and the large rRNA to form the base of the stalk. L10 forms an elongated spine to which L12 dimers bind in a sequential fashion forming a multimeric L10(L12)X complex. One or more lysine residues are methylated.

Forms part of the ribosomal stalk which helps the ribosome interact with GTP-bound translation factors. This Streptococcus uberis (strain ATCC BAA-854 / 0140J) protein is Large ribosomal subunit protein uL11.